Consider the following 361-residue polypeptide: Deoxyhypusine hydroxylase (361 aa).

4 HEAT-like PBS-type repeats span residues 59-85 (LKHE…VLEN), 94-120 (VRHE…YMQD), 183-211 (QRYR…GFRD), and 216-242 (FRHE…RLRD). Fe cation is bound by residues histidine 61, glutamate 62, histidine 96, and glutamate 97. Histidine 218, glutamate 219, histidine 251, and glutamate 252 together coordinate Fe cation.

Belongs to the deoxyhypusine hydroxylase family. The cofactor is Fe(2+).

Its subcellular location is the cytoplasm. The protein resides in the nucleus. It carries out the reaction [eIF5A protein]-deoxyhypusine + AH2 + O2 = [eIF5A protein]-hypusine + A + H2O. Its pathway is protein modification; eIF5A hypusination. Functionally, catalyzes the hydroxylation of the N(6)-(4-aminobutyl)-L-lysine intermediate to form hypusine, an essential post-translational modification only found in mature eIF-5A factor. This is Deoxyhypusine hydroxylase from Cryptococcus neoformans var. neoformans serotype D (strain B-3501A) (Filobasidiella neoformans).